The primary structure comprises 1726 residues: Protein Shroom2 (1726 aa).

Residues 79 to 159 (AGGCYSYWRG…ILKMIVKRRN (81 aa)) form the PDZ domain. Disordered stretches follow at residues 294 to 373 (DNTK…RSDS), 425 to 451 (RTVADTRRTSNSSYHAGLNADQGLSPY), 657 to 676 (FSQLDHSEKGSYRSSQDYSW), and 697 to 785 (EGRN…STYR). The segment covering 318–328 (VLQSTSINETS) has biased composition (polar residues). Residues 329-338 (KIQRTEDNTE) are compositionally biased toward basic and acidic residues. Positions 657–667 (FSQLDHSEKGS) are enriched in basic and acidic residues. Polar residues-rich tracts occupy residues 746–755 (SKSTAALTES) and 769–785 (LESMSPTSEGSFSSTYR). Residues 788 to 877 (LQEAQARVLR…SEPEKINEVG (90 aa)) form the ASD1 domain. 6 disordered regions span residues 913–968 (PKVP…DKVT), 1007–1080 (LDAD…QCGA), 1092–1120 (KWKPHDKSFPIPETSNESQQSRARSGTLP), 1166–1240 (FKKR…KNPS), 1269–1299 (SSKSHLQIPGMEPSRSPSPQFAPQKLTDKPP), and 1471–1499 (AQQRRKHLPKIPSPRSTDDKKDEQNVPSA). Low complexity predominate over residues 917 to 926 (PKVVSSSQSE). Over residues 936-948 (DYAKSSEGQESKR) the composition is skewed to basic and acidic residues. Polar residues-rich tracts occupy residues 1054 to 1070 (NSNSTHCRSSTGDSPTR) and 1104 to 1119 (ETSNESQQSRARSGTL). Over residues 1191-1205 (SSSSLATSSESLLTA) the composition is skewed to low complexity. The segment covering 1209 to 1235 (RAQSYSPSSQDTFPPQSLQKQSPSTYP) has biased composition (polar residues). The 295-residue stretch at 1427-1721 (EELVREIVDK…QLKCLTDSLP (295 aa)) folds into the ASD2 domain.

It belongs to the shroom family. In terms of assembly, interacts with F-actin.

It localises to the apical cell membrane. The protein localises to the cell junction. Its subcellular location is the tight junction. It is found in the cytoplasm. The protein resides in the cytoskeleton. Its function is as follows. May be involved in endothelial cell morphology changes during cell spreading. Required for eye pigmentation. In the retinal pigment epithelium, regulates the biogenesis of melanosomes and promotes their association with the apical cell surface by inducing gamma-tubulin redistribution. The chain is Protein Shroom2 (shroom2) from Xenopus tropicalis (Western clawed frog).